We begin with the raw amino-acid sequence, 214 residues long: Ribosomal RNA small subunit methyltransferase G (214 aa).

Residues glycine 81, methionine 86, 132–133, and arginine 147 contribute to the S-adenosyl-L-methionine site; that span reads AE.

This sequence belongs to the methyltransferase superfamily. RNA methyltransferase RsmG family.

It is found in the cytoplasm. It catalyses the reaction guanosine(527) in 16S rRNA + S-adenosyl-L-methionine = N(7)-methylguanosine(527) in 16S rRNA + S-adenosyl-L-homocysteine. In terms of biological role, specifically methylates the N7 position of guanine in position 527 of 16S rRNA. The chain is Ribosomal RNA small subunit methyltransferase G from Pseudomonas syringae pv. syringae (strain B728a).